The chain runs to 170 residues: Peptide deformylase (170 aa).

The Fe cation site is built by Cys92 and His134. Glu135 is a catalytic residue. His138 is a Fe cation binding site.

This sequence belongs to the polypeptide deformylase family. Fe(2+) is required as a cofactor.

The catalysed reaction is N-terminal N-formyl-L-methionyl-[peptide] + H2O = N-terminal L-methionyl-[peptide] + formate. Functionally, removes the formyl group from the N-terminal Met of newly synthesized proteins. Requires at least a dipeptide for an efficient rate of reaction. N-terminal L-methionine is a prerequisite for activity but the enzyme has broad specificity at other positions. This chain is Peptide deformylase, found in Chromohalobacter salexigens (strain ATCC BAA-138 / DSM 3043 / CIP 106854 / NCIMB 13768 / 1H11).